The primary structure comprises 435 residues: Eukaryotic translation initiation factor 3 subunit E (435 aa).

The PCI domain occupies 219–392 (FFNHPKGRDL…GHVVMGTQPL (174 aa)).

This sequence belongs to the eIF-3 subunit E family. In terms of assembly, component of the eukaryotic translation initiation factor 3 (eIF-3) complex. The eIF-3 complex interacts with pix. Interacts with mxt.

Its subcellular location is the cytoplasm. Functionally, component of the eukaryotic translation initiation factor 3 (eIF-3) complex, which is involved in protein synthesis of a specialized repertoire of mRNAs and, together with other initiation factors, stimulates binding of mRNA and methionyl-tRNAi to the 40S ribosome. The eIF-3 complex specifically targets and initiates translation of a subset of mRNAs involved in cell proliferation. This is Eukaryotic translation initiation factor 3 subunit E (eIF3-S6) from Drosophila erecta (Fruit fly).